The primary structure comprises 694 residues: MQTSPDMFINRELSWLRFNSRVLDQCSKNLPLLEKLKFIAIYCTNLDEFYMIRVAGLKQLFSAGVNASSSDEMTPLQQLKAIRKYLHQEKELLEHYFNEITSELEKENLFIKHYENLDENLKQKCDEYFFSNIFPVIVPIAVDATHPFPHLNNLSFSLAVKIFDKAHPELVKFGMIRIPRVLPRFYEVSANIYVPIESIVHQHAEEIFPGYKLLASAAFRVTRNADMVIEEEEADDFMMILEQGLKLRRKGAFVRLQIQKDADEQIVEFLNTHMKIFHKDVYEYSILLNLPSLWQIAGNKNFTHLLSPLYTPKTLPPFDENLSIFDAVEKEDILIIQPFESFDPVYKFIKEASKDPEVISIRMTLYRVEKNSNIVQALIDAASDGKQVTVMVELKARFDEENNLHWAKALENAGAHVIYGITGFKVHAKVSQVIRKQGDKLKFYMHLSTGNYNASSAKIYTDVSYFTSKAEFARDTTSFFHILSGFSKNRRLQTLSMSPNQIKEKILEMIRIETSKKNKGVIVAKMNSLVDSDIIQALYEASMEGVKIDLIIRGICCLKPDEEYSKNIRVRSIIGKYLEHARVFYFKHSEPNYFISSADWMPRNLERRLELMTPIYDERSKAKLAQFLRLQLSDNVLAYELKNNGEYEKIPSSEKTIDSQQTLEEYVSKIYKTLKKDTDQSRATHLASKLFKEN.

ATP is bound at residue N45. Positions 367 and 397 each coordinate Mg(2+). The active-site Phosphohistidine intermediate is the H427. The ATP site is built by Y460, R553, and H580.

Belongs to the polyphosphate kinase 1 (PPK1) family. Mg(2+) serves as cofactor. An intermediate of this reaction is the autophosphorylated ppk in which a phosphate is covalently linked to a histidine residue through a N-P bond.

The enzyme catalyses [phosphate](n) + ATP = [phosphate](n+1) + ADP. Functionally, catalyzes the reversible transfer of the terminal phosphate of ATP to form a long-chain polyphosphate (polyP). The chain is Polyphosphate kinase from Campylobacter jejuni subsp. doylei (strain ATCC BAA-1458 / RM4099 / 269.97).